Reading from the N-terminus, the 260-residue chain is 14-3-3-like protein C (260 aa).

The protein belongs to the 14-3-3 family.

This chain is 14-3-3-like protein C, found in Nicotiana tabacum (Common tobacco).